A 150-amino-acid chain; its full sequence is UPF0756 membrane protein ACICU_02320 (150 aa).

The next 4 helical transmembrane spans lie at 1-21 (MLAQ…CGLL), 45-65 (FFPY…TIGV), 83-103 (FISF…WLGG), and 115-135 (VVAG…GVPV).

This sequence belongs to the UPF0756 family.

It localises to the cell membrane. The chain is UPF0756 membrane protein ACICU_02320 from Acinetobacter baumannii (strain ACICU).